A 302-amino-acid chain; its full sequence is Probable alpha-L-glutamate ligase (302 aa).

In terms of domain architecture, ATP-grasp spans 104 to 287 (MQLLSREGVG…VAGMIIEFIE (184 aa)). ATP is bound by residues K141, 178 to 179 (EF), D187, and 211 to 213 (RSN). Residues D248, E260, and N262 each contribute to the Mg(2+) site. The Mn(2+) site is built by D248, E260, and N262.

The protein belongs to the RimK family. It depends on Mg(2+) as a cofactor. The cofactor is Mn(2+).

The protein is Probable alpha-L-glutamate ligase of Halorhodospira halophila (strain DSM 244 / SL1) (Ectothiorhodospira halophila (strain DSM 244 / SL1)).